The sequence spans 70 residues: Turripeptide OL179 (70 aa).

A signal peptide spans 1 to 21 (MMAKQVVVLLALLLLLPIVTA). The propeptide occupies 22 to 32 (SMGDASGRTGR).

As to expression, expressed by the venom duct.

It is found in the secreted. Functionally, acts as a neurotoxin by inhibiting an ion channel. This is Turripeptide OL179 from Iotyrris olangoensis (Sea snail).